The chain runs to 360 residues: Zinc metalloproteinase nas-5 (360 aa).

The signal sequence occupies residues 1-21 (MDIKQLLLSIILTVSVVNGRG). One can recognise a Peptidase M12A domain in the interval 61–269 (NALLSNSPLR…KKVCAIYHCS (209 aa)). The N-linked (GlcNAc...) asparagine glycan is linked to Asn108. 2 cysteine pairs are disulfide-bonded: Cys111–Cys268 and Cys134–Cys157. His165 contributes to the Zn(2+) binding site. Glu166 is a catalytic residue. Zn(2+) contacts are provided by His169 and His175. Residues 299 to 336 (QGDSCTDRLGICPMLKSREMLNCKVMATFCCSSCSAPT) enclose the PLAC domain.

Zn(2+) is required as a cofactor.

It is found in the secreted. Metalloprotease. The polypeptide is Zinc metalloproteinase nas-5 (nas-5) (Caenorhabditis elegans).